The chain runs to 776 residues: Transferrin receptor protein 1 (776 aa).

At 1–70 the chain is on the cytoplasmic side; the sequence is MDHARAALSN…QPQRNGKRLC (70 aa). The Endocytosis signal signature appears at 19–22; it reads YTRF. Ser23 is subject to Phosphoserine. A lipid anchor (S-palmitoyl cysteine) is attached at Cys70. The helical; Signal-anchor for type II membrane protein transmembrane segment at 71–91 threads the bilayer; that stretch reads FLVIAAVLLLLIGFLIGYLSY. Residues 92–776 are Extracellular-facing; sequence RGRIELAARC…GDIWETDNEF (685 aa). One can recognise a PA domain in the interval 230–322; the sequence is SESGSVSGKP…GTGDPYTPGF (93 aa). Asn261, Asn326, and Asn391 each carry an N-linked (GlcNAc...) asparagine glycan. Positions 586–776 are ligand-binding; it reads KGDTLENLRK…GDIWETDNEF (191 aa). A Cell attachment site motif is present at residues 662-664; it reads RGD. Asn738 is a glycosylation site (N-linked (GlcNAc...) asparagine).

Belongs to the peptidase M28 family. M28B subfamily. Homodimer; disulfide-linked. Binds one transferrin molecule per subunit. Post-translationally, stearoylated. Stearoylation does not affect iron uptake. N- and O-glycosylated, phosphorylated and palmitoylated.

The protein localises to the cell membrane. The protein resides in the melanosome. Its function is as follows. Cellular uptake of iron occurs via receptor-mediated endocytosis of ligand-occupied transferrin receptor into specialized endosomes. Endosomal acidification leads to iron release. The apotransferrin-receptor complex is then recycled to the cell surface with a return to neutral pH and the concomitant loss of affinity of apotransferrin for its receptor. Transferrin receptor is necessary for development of erythrocytes and the nervous system. Acts as a lipid sensor that regulates mitochondrial fusion by regulating activation of the JNK pathway. When dietary levels of stearate (C18:0) are low, promotes activation of the JNK pathway, resulting in HUWE1-mediated ubiquitination and subsequent degradation of the mitofusin MFN2 and inhibition of mitochondrial fusion. When dietary levels of stearate (C18:0) are high, TFRC stearoylation inhibits activation of the JNK pathway and thus degradation of the mitofusin MFN2. Mediates uptake of NICOL1 into fibroblasts where it may regulate extracellular matrix production. This chain is Transferrin receptor protein 1 (TFRC), found in Gallus gallus (Chicken).